A 350-amino-acid chain; its full sequence is Phenylalanine--tRNA ligase alpha subunit (350 aa).

Position 257 (Glu257) interacts with Mg(2+).

It belongs to the class-II aminoacyl-tRNA synthetase family. Phe-tRNA synthetase alpha subunit type 1 subfamily. As to quaternary structure, tetramer of two alpha and two beta subunits. Mg(2+) is required as a cofactor.

The protein localises to the cytoplasm. It carries out the reaction tRNA(Phe) + L-phenylalanine + ATP = L-phenylalanyl-tRNA(Phe) + AMP + diphosphate + H(+). This Listeria welshimeri serovar 6b (strain ATCC 35897 / DSM 20650 / CCUG 15529 / CIP 8149 / NCTC 11857 / SLCC 5334 / V8) protein is Phenylalanine--tRNA ligase alpha subunit.